The chain runs to 141 residues: Nucleoside triphosphatase NudI (141 aa).

The 141-residue stretch at 1–141 folds into the Nudix hydrolase domain; the sequence is MRQRTIVCPL…RHTLALKGLL (141 aa). The short motif at 38-59 is the Nudix box element; it reads GGVEPGERIEEALRREIREELG.

The protein belongs to the Nudix hydrolase family. NudI subfamily. As to quaternary structure, monomer. Requires Mg(2+) as cofactor.

The enzyme catalyses a ribonucleoside 5'-triphosphate + H2O = a ribonucleoside 5'-phosphate + diphosphate + H(+). It catalyses the reaction a 2'-deoxyribonucleoside 5'-triphosphate + H2O = a 2'-deoxyribonucleoside 5'-phosphate + diphosphate + H(+). The catalysed reaction is dUTP + H2O = dUMP + diphosphate + H(+). It carries out the reaction dTTP + H2O = dTMP + diphosphate + H(+). The enzyme catalyses dCTP + H2O = dCMP + diphosphate + H(+). Catalyzes the hydrolysis of nucleoside triphosphates, with a preference for pyrimidine deoxynucleoside triphosphates (dUTP, dTTP and dCTP). In Salmonella paratyphi B (strain ATCC BAA-1250 / SPB7), this protein is Nucleoside triphosphatase NudI.